A 666-amino-acid chain; its full sequence is Pentatricopeptide repeat-containing protein At1g64100 (666 aa).

15 PPR repeats span residues 105-139 (TAVD…RIPL), 140-174 (NIYS…GFQP), 175-209 (DVVT…GFLE), 225-259 (VVIT…GLHI), 260-294 (DVVT…HIKP), 295-329 (DVVI…GIAP), 330-364 (NVFT…EINP), 365-399 (DVLT…CIFP), 400-430 (DTVT…MASP), 431-465 (DVVT…GLVA), 466-500 (NTTT…GVCP), 501-535 (DTIT…KIDL), 536-570 (DTVA…GVEP), 571-605 (DVQT…GHEP), and 606-640 (DNST…GFSG).

The protein belongs to the PPR family. P subfamily.

This is Pentatricopeptide repeat-containing protein At1g64100 from Arabidopsis thaliana (Mouse-ear cress).